The following is a 483-amino-acid chain: Regulatory protein ViaA (483 aa).

This sequence belongs to the ViaA family. As to quaternary structure, homodimer. Interacts with RavA.

The protein resides in the cytoplasm. Functionally, component of the RavA-ViaA chaperone complex, which may act on the membrane to optimize the function of some of the respiratory chains. ViaA stimulates the ATPase activity of RavA. In Escherichia coli O81 (strain ED1a), this protein is Regulatory protein ViaA.